A 513-amino-acid chain; its full sequence is GMP synthase [glutamine-hydrolyzing] (513 aa).

A Glutamine amidotransferase type-1 domain is found at 3–200 (SVTVLDFGSQ…LIDIAGIKPD (198 aa)). Cys80 functions as the Nucleophile in the catalytic mechanism. Residues His174 and Glu176 contribute to the active site. The GMPS ATP-PPase domain maps to 201–388 (WSPKSFIGHQ…LGIAEDILMR (188 aa)). 228–234 (SGGVDST) provides a ligand contact to ATP.

In terms of assembly, homodimer.

It catalyses the reaction XMP + L-glutamine + ATP + H2O = GMP + L-glutamate + AMP + diphosphate + 2 H(+). Its pathway is purine metabolism; GMP biosynthesis; GMP from XMP (L-Gln route): step 1/1. Functionally, catalyzes the synthesis of GMP from XMP. This Chlorobium phaeobacteroides (strain DSM 266 / SMG 266 / 2430) protein is GMP synthase [glutamine-hydrolyzing].